Reading from the N-terminus, the 101-residue chain is Ubiquitin-related modifier 1 homolog (101 aa).

The residue at position 101 (G101) is a 1-thioglycine. Residue G101 forms a Glycyl lysine isopeptide (Gly-Lys) (interchain with K-? in acceptor proteins) linkage.

The protein belongs to the URM1 family. As to quaternary structure, interacts with cer. C-terminal thiocarboxylation occurs in 2 steps, it is first acyl-adenylated (-COAMP) via the hesA/moeB/thiF part of the MOCS3 homolog, then thiocarboxylated (-COSH) via the rhodanese domain of the MOCS3 homolog.

It is found in the cytoplasm. It functions in the pathway tRNA modification; 5-methoxycarbonylmethyl-2-thiouridine-tRNA biosynthesis. Acts as a sulfur carrier required for 2-thiolation of mcm(5)S(2)U at tRNA wobble positions of cytosolic tRNA(Lys), tRNA(Glu) and tRNA(Gln). Serves as sulfur donor in tRNA 2-thiolation reaction by being thiocarboxylated (-COSH) at its C-terminus by MOCS3. The sulfur is then transferred to tRNA to form 2-thiolation of mcm(5)S(2)U. Also acts as a ubiquitin-like protein (UBL) that is covalently conjugated via an isopeptide bond to lysine residues of target proteins such as Prx2/Jafrac1, Ciao1, Eip71CD and GILT1. The thiocarboxylated form serves as substrate for conjugation and oxidative stress specifically induces the formation of UBL-protein conjugates. The polypeptide is Ubiquitin-related modifier 1 homolog (Drosophila sechellia (Fruit fly)).